The primary structure comprises 152 residues: Deoxyuridine 5'-triphosphate nucleotidohydrolase (152 aa).

Substrate-binding positions include 70-72 (RSG), Asn-83, 87-89 (TID), and Lys-97.

The protein belongs to the dUTPase family. The cofactor is Mg(2+).

The enzyme catalyses dUTP + H2O = dUMP + diphosphate + H(+). The protein operates within pyrimidine metabolism; dUMP biosynthesis; dUMP from dCTP (dUTP route): step 2/2. Its function is as follows. This enzyme is involved in nucleotide metabolism: it produces dUMP, the immediate precursor of thymidine nucleotides and it decreases the intracellular concentration of dUTP so that uracil cannot be incorporated into DNA. The protein is Deoxyuridine 5'-triphosphate nucleotidohydrolase of Corynebacterium diphtheriae (strain ATCC 700971 / NCTC 13129 / Biotype gravis).